The following is a 105-amino-acid chain: Small ribosomal subunit protein uS10 (105 aa).

This sequence belongs to the universal ribosomal protein uS10 family. In terms of assembly, part of the 30S ribosomal subunit.

Involved in the binding of tRNA to the ribosomes. This is Small ribosomal subunit protein uS10 from Acidobacterium capsulatum (strain ATCC 51196 / DSM 11244 / BCRC 80197 / JCM 7670 / NBRC 15755 / NCIMB 13165 / 161).